The sequence spans 336 residues: Structure-specific endonuclease subunit SLX1 (336 aa).

A GIY-YIG domain is found at 21–104 (SFYGVYLLQS…QHCHETRHIK (84 aa)). Residues 37–57 (FYIGSTPDPPRRLRQHNGDLK) are disordered. The SLX1-type zinc-finger motif lies at 214–290 (CALCLEPIEQ…PATVNRCCSC (77 aa)).

This sequence belongs to the SLX1 family. Forms a heterodimer with SLX4. A divalent metal cation is required as a cofactor.

It is found in the nucleus. Functionally, catalytic subunit of the SLX1-SLX4 structure-specific endonuclease that resolves DNA secondary structures generated during DNA repair and recombination. Has endonuclease activity towards branched DNA substrates, introducing single-strand cuts in duplex DNA close to junctions with ss-DNA. The chain is Structure-specific endonuclease subunit SLX1 from Scheffersomyces stipitis (strain ATCC 58785 / CBS 6054 / NBRC 10063 / NRRL Y-11545) (Yeast).